Here is a 394-residue protein sequence, read N- to C-terminus: MSNKKNEDIEMRAVEGANDFGGEKDPFLGRNSPVLRPRGREPTASAYFGKLDNSPGASIIAYCLSSISMTVVNKYVVSGESWNLNFFYLGVQSLVCTIAILLSRQTGLIKNLAPFDSNKAKRWFPVSLLLVSMIYTGANALQYLSVPVYTIFKNLTIIVIAYGEVLWFGGSVTPLMLLSFGLMVLSSVVAAWADIQAAIDGVGHSAETSAALATLNAGYAWMGLNVVCTSSYLLGMRKVIKKMNFKDYDSMFYNNLLTIPVLVVCSLLVEDWSSENLAKNFPIETRNKLMVGMIYSGLAAIFISYCSAWCIRVTSSTTYSMVGALNKLPIAISGLIFFDAPITFGSITAIAVGFVSGLVFAWAKVRQKAQEAGLLPTTKPTMSASAQSNRDANS.

Over 1-56 the chain is Cytoplasmic; it reads MSNKKNEDIEMRAVEGANDFGGEKDPFLGRNSPVLRPRGREPTASAYFGKLDNSPG. The helical transmembrane segment at 57-77 threads the bilayer; it reads ASIIAYCLSSISMTVVNKYVV. Topologically, residues 78–81 are lumenal; sequence SGES. Residues 82–102 form a helical membrane-spanning segment; the sequence is WNLNFFYLGVQSLVCTIAILL. The Cytoplasmic segment spans residues 103-122; that stretch reads SRQTGLIKNLAPFDSNKAKR. A helical transmembrane segment spans residues 123-145; the sequence is WFPVSLLLVSMIYTGANALQYLS. Residues 146–150 lie on the Lumenal side of the membrane; that stretch reads VPVYT. Residues 151 to 168 traverse the membrane as a helical segment; it reads IFKNLTIIVIAYGEVLWF. Residues 169 to 174 lie on the Cytoplasmic side of the membrane; the sequence is GGSVTP. Residues 175 to 199 traverse the membrane as a helical segment; that stretch reads LMLLSFGLMVLSSVVAAWADIQAAI. Over 200-207 the chain is Lumenal; that stretch reads DGVGHSAE. Residues 208–228 form a helical membrane-spanning segment; sequence TSAALATLNAGYAWMGLNVVC. At 229–249 the chain is on the cytoplasmic side; sequence TSSYLLGMRKVIKKMNFKDYD. A helical membrane pass occupies residues 250 to 270; the sequence is SMFYNNLLTIPVLVVCSLLVE. Over 271-288 the chain is Lumenal; sequence DWSSENLAKNFPIETRNK. A helical transmembrane segment spans residues 289 to 309; the sequence is LMVGMIYSGLAAIFISYCSAW. Topologically, residues 310–317 are cytoplasmic; that stretch reads CIRVTSST. Residues 318–338 form a helical membrane-spanning segment; it reads TYSMVGALNKLPIAISGLIFF. The Lumenal segment spans residues 339-341; sequence DAP. The helical transmembrane segment at 342-362 threads the bilayer; the sequence is ITFGSITAIAVGFVSGLVFAW. Topologically, residues 363-394 are cytoplasmic; sequence AKVRQKAQEAGLLPTTKPTMSASAQSNRDANS.

It belongs to the TPT transporter family. SLC35D subfamily. As to quaternary structure, homooligomer.

It is found in the golgi apparatus membrane. The protein resides in the cytoplasmic vesicle membrane. The protein localises to the endoplasmic reticulum membrane. Its function is as follows. Involved in the import of GDP-mannose from the cytoplasm into the Golgi lumen. This chain is GDP-mannose transporter (VRG4), found in Chaetomium globosum (strain ATCC 6205 / CBS 148.51 / DSM 1962 / NBRC 6347 / NRRL 1970) (Soil fungus).